Reading from the N-terminus, the 308-residue chain is HPr kinase/phosphorylase (308 aa).

Residues histidine 138 and lysine 159 contribute to the active site. An ATP-binding site is contributed by 153–160 (GESGLGKS). A Mg(2+)-binding site is contributed by serine 160. Aspartate 177 acts as the Proton acceptor; for phosphorylation activity. Proton donor; for dephosphorylation activity in catalysis. Residues 201–210 (LEVRGLGLLD) form an important for the catalytic mechanism of both phosphorylation and dephosphorylation region. Glutamate 202 contacts Mg(2+). Arginine 243 is a catalytic residue. The segment at 264–269 (QVAAGR) is important for the catalytic mechanism of dephosphorylation.

Belongs to the HPrK/P family. As to quaternary structure, homohexamer. Requires Mg(2+) as cofactor.

It carries out the reaction [HPr protein]-L-serine + ATP = [HPr protein]-O-phospho-L-serine + ADP + H(+). The catalysed reaction is [HPr protein]-O-phospho-L-serine + phosphate + H(+) = [HPr protein]-L-serine + diphosphate. Functionally, catalyzes the ATP- as well as the pyrophosphate-dependent phosphorylation of a specific serine residue in HPr, a phosphocarrier protein of the phosphoenolpyruvate-dependent sugar phosphotransferase system (PTS). HprK/P also catalyzes the pyrophosphate-producing, inorganic phosphate-dependent dephosphorylation (phosphorolysis) of seryl-phosphorylated HPr (P-Ser-HPr). This Bordetella petrii (strain ATCC BAA-461 / DSM 12804 / CCUG 43448) protein is HPr kinase/phosphorylase.